The following is a 291-amino-acid chain: Transcription factor bHLH53 (291 aa).

Residues 163 to 212 (PTLSSQSIAARGRRRRIAEKTHELGKLIPGGNKLNTAEMFQAAAKYVKFL) form the bHLH domain.

Homodimer. As to expression, expressed constitutively in roots, leaves, stems, and flowers.

It is found in the nucleus. This Arabidopsis thaliana (Mouse-ear cress) protein is Transcription factor bHLH53 (BHLH53).